The chain runs to 505 residues: 2,3-bisphosphoglycerate-independent phosphoglycerate mutase (505 aa).

D13 and S63 together coordinate Mn(2+). The Phosphoserine intermediate role is filled by S63. Substrate-binding positions include H124, 153–154, R183, R189, 254–257, and K330; these read RD and RADR. Mn(2+)-binding residues include D396, H400, D437, H438, and H456.

It belongs to the BPG-independent phosphoglycerate mutase family. As to quaternary structure, monomer. It depends on Mn(2+) as a cofactor.

The enzyme catalyses (2R)-2-phosphoglycerate = (2R)-3-phosphoglycerate. It participates in carbohydrate degradation; glycolysis; pyruvate from D-glyceraldehyde 3-phosphate: step 3/5. In terms of biological role, catalyzes the interconversion of 2-phosphoglycerate and 3-phosphoglycerate. This Roseobacter denitrificans (strain ATCC 33942 / OCh 114) (Erythrobacter sp. (strain OCh 114)) protein is 2,3-bisphosphoglycerate-independent phosphoglycerate mutase.